Consider the following 119-residue polypeptide: V-type proton ATPase subunit F (119 aa).

It belongs to the V-ATPase F subunit family. V-ATPase is a heteromultimeric enzyme made up of two complexes: the ATP-hydrolytic V1 complex and the proton translocation V0 complex. The V1 complex consists of three catalytic AB heterodimers that form a heterohexamer, three peripheral stalks each consisting of EG heterodimers, one central rotor including subunits D and F, and the regulatory subunits C and H. The proton translocation complex V0 consists of the proton transport subunit a, a ring of proteolipid subunits c9c'', rotary subunit d, subunits e and f, and the accessory subunits ATP6AP1/Ac45 and ATP6AP2/PRR.

It is found in the cytoplasmic vesicle. It localises to the secretory vesicle. The protein localises to the synaptic vesicle membrane. The protein resides in the clathrin-coated vesicle membrane. Its function is as follows. Subunit of the V1 complex of vacuolar(H+)-ATPase (V-ATPase), a multisubunit enzyme composed of a peripheral complex (V1) that hydrolyzes ATP and a membrane integral complex (V0) that translocates protons. V-ATPase is responsible for acidifying and maintaining the pH of intracellular compartments and in some cell types, is targeted to the plasma membrane, where it is responsible for acidifying the extracellular environment. In Homo sapiens (Human), this protein is V-type proton ATPase subunit F (ATP6V1F).